The chain runs to 651 residues: ATP-dependent RNA helicase MRH4, mitochondrial (651 aa).

The N-terminal 61 residues, 1–61 (MLRSSLGSVC…SNARQATRRE (61 aa)), are a transit peptide targeting the mitochondrion. The segment covering 45 to 56 (SSLSFSTSNARQ) has biased composition (polar residues). Residues 45 to 137 (SSLSFSTSNA…GGKKLGRDGK (93 aa)) form a disordered region. Basic and acidic residues-rich tracts occupy residues 72–83 (RVGRSTARDGDK) and 124–137 (NGREGGKKLGRDGK). A Q motif motif is present at residues 167–200 (DSFDQFDLLPQVKDAVLNEALKGMLDIKPTPVQR). The tract at residues 210–241 (TTGARSRWRTKSKPADSGSEAASPDAPPPPRE) is disordered. Residues 224–233 (ADSGSEAASP) are compositionally biased toward low complexity. Residues 234–445 (DAPPPPREEF…ASRFPNMRRI (212 aa)) form the Helicase ATP-binding domain. 247–254 (AETGSGKT) is a binding site for ATP. The DEAD box signature appears at 392 to 395 (DEAD). Positions 494 to 651 (PVKGQVDVRR…ESMFMGQALV (158 aa)) constitute a Helicase C-terminal domain.

It belongs to the DEAD box helicase family. MRH4 subfamily.

It is found in the mitochondrion. The catalysed reaction is ATP + H2O = ADP + phosphate + H(+). In terms of biological role, ATP-binding RNA helicase involved in mitochondrial RNA metabolism. Required for maintenance of mitochondrial DNA. The polypeptide is ATP-dependent RNA helicase MRH4, mitochondrial (MRH4) (Pyricularia oryzae (strain 70-15 / ATCC MYA-4617 / FGSC 8958) (Rice blast fungus)).